The sequence spans 74 residues: Kappa-stichotoxin-Sgt4a (74 aa).

Positions 1 to 22 are cleaved as a signal peptide; the sequence is MKFQVIAAVLLIEFCLCVVVTA. A propeptide spanning residues 23-39 is cleaved from the precursor; the sequence is RMELQDVEDVENGFQKR. Positions 42-74 constitute a ShKT domain; it reads CIDTIPQSRCTAFQCKHSMKYRLSFCRKTCGTC. Intrachain disulfides connect C42–C74, C51–C67, and C56–C71.

It belongs to the sea anemone type 1 potassium channel toxin family. Type 1a subfamily.

It localises to the secreted. It is found in the nematocyst. Functionally, inhibits voltage-gated potassium channels (Kv) with higher potency for Kv1.1/KCNA1 and Kv1.3/KCNA3. This is Kappa-stichotoxin-Sgt4a from Stichodactyla gigantea (Giant carpet anemone).